Reading from the N-terminus, the 154-residue chain is Putative pre-16S rRNA nuclease (154 aa).

This sequence belongs to the YqgF nuclease family.

It localises to the cytoplasm. Could be a nuclease involved in processing of the 5'-end of pre-16S rRNA. This Rickettsia africae (strain ESF-5) protein is Putative pre-16S rRNA nuclease.